The chain runs to 233 residues: Protein Mis18-alpha (233 aa).

3 positions are modified to phosphoserine: Ser-36, Ser-39, and Ser-40. A Mis18 domain is found at 80–178 (PLVFLCSGCR…NVEAVESYVL (99 aa)). Zn(2+) is bound by residues Cys-85, Cys-88, Cys-141, and Cys-144. Lys-162 participates in a covalent cross-link: Glycyl lysine isopeptide (Lys-Gly) (interchain with G-Cter in SUMO2). Ser-233 is subject to Phosphoserine.

Belongs to the mis18 family. As to quaternary structure, homodimer, and heterodimer with OIP5/MIS18B. Identified in a complex containing MIS18A, OIP5/MIS18B, MIS18BP1, RBBP7 and RBBP4.

Its subcellular location is the nucleus. The protein localises to the chromosome. The protein resides in the centromere. In terms of biological role, required for recruitment of CENPA to centromeres and normal chromosome segregation during mitosis. The protein is Protein Mis18-alpha (MIS18A) of Plecturocebus moloch (Dusky titi monkey).